Consider the following 310-residue polypeptide: Glutamyl-Q tRNA(Asp) synthetase (310 aa).

Residues 8 to 12 (RFAPS) and Glu44 each bind L-glutamate. The 'HIGH' region motif lies at 11-21 (PSPTGPLHLGS). 4 residues coordinate Zn(2+): Cys100, Cys102, Tyr123, and Cys127. Positions 183 and 201 each coordinate L-glutamate. The 'KMSKS' region signature appears at 239 to 243 (KLSKQ). Position 242 (Lys242) interacts with ATP.

Belongs to the class-I aminoacyl-tRNA synthetase family. GluQ subfamily. It depends on Zn(2+) as a cofactor.

Functionally, catalyzes the tRNA-independent activation of glutamate in presence of ATP and the subsequent transfer of glutamate onto a tRNA(Asp). Glutamate is transferred on the 2-amino-5-(4,5-dihydroxy-2-cyclopenten-1-yl) moiety of the queuosine in the wobble position of the QUC anticodon. This Cupriavidus metallidurans (strain ATCC 43123 / DSM 2839 / NBRC 102507 / CH34) (Ralstonia metallidurans) protein is Glutamyl-Q tRNA(Asp) synthetase.